A 248-amino-acid chain; its full sequence is tRNA (guanine-N(1)-)-methyltransferase (248 aa).

Residues glycine 113 and 133–138 (IGDYVL) each bind S-adenosyl-L-methionine. The tract at residues 227-248 (RPAQTIRAKGESQKTPKNKTDG) is disordered. The segment covering 234 to 248 (AKGESQKTPKNKTDG) has biased composition (basic and acidic residues).

Belongs to the RNA methyltransferase TrmD family. As to quaternary structure, homodimer.

It is found in the cytoplasm. The catalysed reaction is guanosine(37) in tRNA + S-adenosyl-L-methionine = N(1)-methylguanosine(37) in tRNA + S-adenosyl-L-homocysteine + H(+). In terms of biological role, specifically methylates guanosine-37 in various tRNAs. This is tRNA (guanine-N(1)-)-methyltransferase from Rhodopseudomonas palustris (strain TIE-1).